The chain runs to 371 residues: Chaperone protein DnaJ (371 aa).

The region spanning 5-69 (DYYEVLGLSK…QKRAQYDQFG (65 aa)) is the J domain. Residues 133-215 (GKELNVEIPV…CHGSGKVRKR (83 aa)) form a CR-type zinc finger. Residues cysteine 146, cysteine 149, cysteine 163, cysteine 166, cysteine 189, cysteine 192, cysteine 203, and cysteine 206 each coordinate Zn(2+). CXXCXGXG motif repeat units lie at residues 146 to 153 (CDTCKGSG), 163 to 170 (CKHCSGSG), 189 to 196 (CSHCSGTG), and 203 to 210 (CTTCHGSG).

It belongs to the DnaJ family. In terms of assembly, homodimer. Requires Zn(2+) as cofactor.

The protein resides in the cytoplasm. Functionally, participates actively in the response to hyperosmotic and heat shock by preventing the aggregation of stress-denatured proteins and by disaggregating proteins, also in an autonomous, DnaK-independent fashion. Unfolded proteins bind initially to DnaJ; upon interaction with the DnaJ-bound protein, DnaK hydrolyzes its bound ATP, resulting in the formation of a stable complex. GrpE releases ADP from DnaK; ATP binding to DnaK triggers the release of the substrate protein, thus completing the reaction cycle. Several rounds of ATP-dependent interactions between DnaJ, DnaK and GrpE are required for fully efficient folding. Also involved, together with DnaK and GrpE, in the DNA replication of plasmids through activation of initiation proteins. This is Chaperone protein DnaJ from Bacillus anthracis (strain A0248).